The following is a 64-amino-acid chain: SPbeta prophage-derived uncharacterized protein YoqI (64 aa).

This is SPbeta prophage-derived uncharacterized protein YoqI (yoqI) from Bacillus subtilis (strain 168).